A 309-amino-acid chain; its full sequence is tRNA-cytidine(32) 2-sulfurtransferase (309 aa).

The PP-loop motif signature appears at Ser-47 to Ser-52. The [4Fe-4S] cluster site is built by Cys-122, Cys-125, and Cys-213.

The protein belongs to the TtcA family. As to quaternary structure, homodimer. The cofactor is Mg(2+). [4Fe-4S] cluster is required as a cofactor.

The protein resides in the cytoplasm. The catalysed reaction is cytidine(32) in tRNA + S-sulfanyl-L-cysteinyl-[cysteine desulfurase] + AH2 + ATP = 2-thiocytidine(32) in tRNA + L-cysteinyl-[cysteine desulfurase] + A + AMP + diphosphate + H(+). The protein operates within tRNA modification. Catalyzes the ATP-dependent 2-thiolation of cytidine in position 32 of tRNA, to form 2-thiocytidine (s(2)C32). The sulfur atoms are provided by the cysteine/cysteine desulfurase (IscS) system. This is tRNA-cytidine(32) 2-sulfurtransferase from Erwinia tasmaniensis (strain DSM 17950 / CFBP 7177 / CIP 109463 / NCPPB 4357 / Et1/99).